Here is a 427-residue protein sequence, read N- to C-terminus: Transcription factor MYB98 (427 aa).

The Nuclear localization signal 1 signature appears at 195–202; sequence TRKLSSSS. HTH myb-type domains follow at residues 212–267 and 268–318; these read KSTL…RPDI and KKET…RRQF. 2 consecutive DNA-binding regions (H-T-H motif) follow at residues 240–263 and 291–314; these read WSHI…HNHL and WAEI…NATK. The short motif at 361-368 is the Nuclear localization signal 2 element; that stretch reads NKKKDVVV.

Expressed at high levels in the synergid cells of the female gametophyte, and at lower levels in the endosperm of young seeds and the trichomes of young leaves and sepals.

It is found in the nucleus. Transcription factor that binds to the motif 5'-GTAACNT-3' in the promoter of target genes (e.g. DD11 and DD18) and promotes their expression within synergid cells (e.g. in the filiform apparatus) in ovules. Required for the formation of the filiform apparatus during synergid cell differentiation in the female gametophyte. Involved in pollen tube guidance to the micropyle. This chain is Transcription factor MYB98, found in Arabidopsis thaliana (Mouse-ear cress).